Here is a 151-residue protein sequence, read N- to C-terminus: Ubiquitin-conjugating enzyme E2 2 (151 aa).

Residues 1 to 26 are disordered; the sequence is MSTTARRRLMRDFKRMQQDPPQGVSA. Residues 4–150 form the UBC core domain; that stretch reads TARRRLMRDF…VRDTVEASWT (147 aa). The active-site Glycyl thioester intermediate is the Cys-88.

Belongs to the ubiquitin-conjugating enzyme family.

The protein localises to the cytoplasm. Its subcellular location is the nucleus. It carries out the reaction S-ubiquitinyl-[E1 ubiquitin-activating enzyme]-L-cysteine + [E2 ubiquitin-conjugating enzyme]-L-cysteine = [E1 ubiquitin-activating enzyme]-L-cysteine + S-ubiquitinyl-[E2 ubiquitin-conjugating enzyme]-L-cysteine.. Its pathway is protein modification; protein ubiquitination. Its function is as follows. Catalyzes the covalent attachment of ubiquitin to other proteins. Plays a role in transcription regulation by catalyzing the monoubiquitination of histone H2B to form H2BK123ub1. H2BK123ub1 gives a specific tag for epigenetic transcriptional activation and is also a prerequisite for H3K4me and H3K79me formation. Also involved in postreplication repair of UV-damaged DNA, in N-end rule-dependent protein degradation and in sporulation. The protein is Ubiquitin-conjugating enzyme E2 2 (UBC2) of Yarrowia lipolytica (strain CLIB 122 / E 150) (Yeast).